A 173-amino-acid polypeptide reads, in one-letter code: Crossover junction endodeoxyribonuclease RuvC (173 aa).

Active-site residues include D8, E67, and D139. Mg(2+) contacts are provided by D8, E67, and D139.

It belongs to the RuvC family. As to quaternary structure, homodimer which binds Holliday junction (HJ) DNA. The HJ becomes 2-fold symmetrical on binding to RuvC with unstacked arms; it has a different conformation from HJ DNA in complex with RuvA. In the full resolvosome a probable DNA-RuvA(4)-RuvB(12)-RuvC(2) complex forms which resolves the HJ. Mg(2+) serves as cofactor.

The protein resides in the cytoplasm. The catalysed reaction is Endonucleolytic cleavage at a junction such as a reciprocal single-stranded crossover between two homologous DNA duplexes (Holliday junction).. The RuvA-RuvB-RuvC complex processes Holliday junction (HJ) DNA during genetic recombination and DNA repair. Endonuclease that resolves HJ intermediates. Cleaves cruciform DNA by making single-stranded nicks across the HJ at symmetrical positions within the homologous arms, yielding a 5'-phosphate and a 3'-hydroxyl group; requires a central core of homology in the junction. The consensus cleavage sequence is 5'-(A/T)TT(C/G)-3'. Cleavage occurs on the 3'-side of the TT dinucleotide at the point of strand exchange. HJ branch migration catalyzed by RuvA-RuvB allows RuvC to scan DNA until it finds its consensus sequence, where it cleaves and resolves the cruciform DNA. This Aeromonas salmonicida (strain A449) protein is Crossover junction endodeoxyribonuclease RuvC.